The sequence spans 807 residues: Tyrosine-protein kinase receptor torso (807 aa).

An N-terminal signal peptide occupies residues 1–28 (MYSEGKLLKVFLIFAGFIIFSLCGEVVS). The Extracellular segment spans residues 29 to 370 (QRYPPAPGLL…RAFTPGMLRW (342 aa)). Cystine bridges form between cysteine 46/cysteine 61, cysteine 81/cysteine 203, cysteine 210/cysteine 239, and cysteine 259/cysteine 265. N-linked (GlcNAc...) asparagine glycosylation is found at asparagine 54, asparagine 171, asparagine 183, and asparagine 195. Asparagine 307, asparagine 323, and asparagine 344 each carry an N-linked (GlcNAc...) asparagine glycan. The chain crosses the membrane as a helical span at residues 371–391 (VWAGATAGAGCAAGGLLAATL). Over 392-807 (LCCGHRRATS…SPPVIQTKTA (416 aa)) the chain is Cytoplasmic. Positions 439-738 (VLLHEVIGEG…PTFPELHQKL (300 aa)) constitute a Protein kinase domain. Residues 445–453 (IGEGAFGVV) and lysine 468 contribute to the ATP site. Aspartate 607 acts as the Proton acceptor in catalysis.

The protein belongs to the protein kinase superfamily. Tyr protein kinase family. In terms of assembly, homodimer; disulfide-linked. Requires Mg(2+) as cofactor. Post-translationally, may be auto-phosphorylated on tyrosine residues. At least one of the 3 cysteine residues Cys-381, Cys-393 or Cys-394 is involved in the formation of interchain disulfide bonds. The disulfide bond sites in the extracellular region are not involved in homodimer formation.

Its subcellular location is the cell membrane. It catalyses the reaction L-tyrosyl-[protein] + ATP = O-phospho-L-tyrosyl-[protein] + ADP + H(+). In terms of biological role, probable receptor tyrosine kinase. During postembryonic development, involved in the initiation of metamorphosis probably by inducing the production of ecdysone in response to prothoracicotropic hormone (PTTH). Binding to PTTH stimulates activation of canonical MAPK signaling leading to ERK phosphorylation. In Bombyx mori (Silk moth), this protein is Tyrosine-protein kinase receptor torso.